An 89-amino-acid polypeptide reads, in one-letter code: Cell division protein FtsL (89 aa).

Over 1-6 the chain is Cytoplasmic; it reads MAMNKL. A helical membrane pass occupies residues 7–24; that stretch reads NFLLLLAVCVSAFSVVMQ. The Periplasmic portion of the chain corresponds to 25–89; it reads QNQYRLNFTA…GNTFMVEHQR (65 aa). The stretch at 33–73 forms a coiled coil; the sequence is TALDKAKKQEIALEQDYAQMRLQQARLANHEAIRAAAEKQN.

The protein belongs to the FtsL family. As to quaternary structure, part of a complex composed of FtsB, FtsL and FtsQ.

The protein localises to the cell inner membrane. In terms of biological role, essential cell division protein. May link together the upstream cell division proteins, which are predominantly cytoplasmic, with the downstream cell division proteins, which are predominantly periplasmic. The protein is Cell division protein FtsL of Neisseria meningitidis serogroup B (strain ATCC BAA-335 / MC58).